Here is a 247-residue protein sequence, read N- to C-terminus: C-type lectin domain family 7 member A (247 aa).

Topologically, residues 1–44 are cytoplasmic; sequence MEYQSSVENLDEDGYTQLDFSSRNITRRSVVSEKGLCAASSHWR. Positions 15–18 match the ITAM-like motif; sequence YTQL. A helical; Signal-anchor for type II membrane protein membrane pass occupies residues 45–65; that stretch reads LIAVTLGILCSVMLVITVVLS. Residues 66-247 are Extracellular-facing; it reads TSGIWRSSSG…YSICEKKLSV (182 aa). The span at 81–101 shows a compositional bias: polar residues; the sequence is SDSFPSRNKDNQSQPTQSSLE. The disordered stretch occupies residues 81-103; the sequence is SDSFPSRNKDNQSQPTQSSLEDS. The N-linked (GlcNAc...) asparagine glycan is linked to Asn-91. Disulfide bonds link Cys-120–Cys-131, Cys-148–Cys-241, and Cys-220–Cys-233. Positions 127 to 242 constitute a C-type lectin domain; the sequence is HEDSCYLFST…CSVHSYSICE (116 aa). 146-153 contacts (1,3-beta-D-glucosyl)n; it reads RQCFQLGS. A divalent metal cation-binding residues include Lys-157, Asp-159, and Glu-163. Glu-195 lines the (1,3-beta-D-glucosyl)n pocket. An a divalent metal cation-binding site is contributed by Glu-242.

As to quaternary structure, homodimer. Interacts with SYK; participates in leukocyte activation in presence of fungal pathogens. Interacts with CD37; this interaction controls CLEC7A-mediated IL-6 production. Phosphorylated on tyrosine residues in response to beta-glucan binding. Detected in bone marrow, monocytes, macrophages, dendritic cells and natural killer cells.

The protein localises to the cell membrane. In terms of biological role, lectin that functions as a pattern recognizing receptor (PRR) specific for beta-1,3-linked and beta-1,6-linked glucans, which constitute cell wall constituents from pathogenic bacteria and fungi. Necessary for the TLR2-mediated inflammatory response and activation of NF-kappa-B: upon beta-glucan binding, recruits SYK via its ITAM motif and promotes a signaling cascade that activates some CARD domain-BCL10-MALT1 (CBM) signalosomes, leading to the activation of NF-kappa-B and MAP kinase p38 (MAPK11, MAPK12, MAPK13 and/or MAPK14) pathways which stimulate expression of genes encoding pro-inflammatory cytokines and chemokines. Enhances cytokine production in macrophages and dendritic cells. Mediates production of reactive oxygen species in the cell. Mediates phagocytosis of C.albicans conidia. Binds T-cells in a way that does not involve their surface glycans and plays a role in T-cell activation. Stimulates T-cell proliferation. Induces phosphorylation of SCIMP after binding beta-glucans. The protein is C-type lectin domain family 7 member A (CLEC7A) of Bos taurus (Bovine).